We begin with the raw amino-acid sequence, 351 residues long: SKP1-like protein 21 (351 aa).

The interaction with the F-box domain of F-box proteins stretch occupies residues 108–167 (TSAADSLQLKPLVDLTSRALARIIEGKTPEEIREIFHLPDDLTEEEKLEPLKNTMDDPRI). 2 disordered regions span residues 216-240 (VKTS…NGTC) and 330-351 (VNFS…AGHK). Positions 217-230 (KTSKSKKKNKKRKE) are enriched in basic residues. A compositionally biased stretch (polar residues) spans 330–342 (VNFSINGNGTSRR).

Belongs to the SKP1 family. In terms of assembly, part of a SCF (SKP1-cullin-F-box) protein ligase complex. In terms of tissue distribution, expressed in young seedlings, roots, leaves, floral stems, inflorescences, and siliques.

It is found in the nucleus. It participates in protein modification; protein ubiquitination. Functionally, involved in ubiquitination and subsequent proteasomal degradation of target proteins. Together with CUL1, RBX1 and a F-box protein, it forms a SCF E3 ubiquitin ligase complex. The functional specificity of this complex depends on the type of F-box protein. In the SCF complex, it serves as an adapter that links the F-box protein to CUL1. The polypeptide is SKP1-like protein 21 (ASK21) (Arabidopsis thaliana (Mouse-ear cress)).